Here is a 949-residue protein sequence, read N- to C-terminus: Glycine dehydrogenase (decarboxylating) (949 aa).

K702 carries the post-translational modification N6-(pyridoxal phosphate)lysine.

Belongs to the GcvP family. As to quaternary structure, the glycine cleavage system is composed of four proteins: P, T, L and H. The cofactor is pyridoxal 5'-phosphate.

It catalyses the reaction N(6)-[(R)-lipoyl]-L-lysyl-[glycine-cleavage complex H protein] + glycine + H(+) = N(6)-[(R)-S(8)-aminomethyldihydrolipoyl]-L-lysyl-[glycine-cleavage complex H protein] + CO2. The glycine cleavage system catalyzes the degradation of glycine. The P protein binds the alpha-amino group of glycine through its pyridoxal phosphate cofactor; CO(2) is released and the remaining methylamine moiety is then transferred to the lipoamide cofactor of the H protein. This Rhodococcoides fascians (Rhodococcus fascians) protein is Glycine dehydrogenase (decarboxylating).